The following is a 963-amino-acid chain: Longitudinals lacking protein, isoforms J/P/Q/S/Z (963 aa).

Residues 32 to 97 (VDCTLAAEGK…MYRGEVNISQ (66 aa)) enclose the BTB domain. Disordered regions lie at residues 115–200 (LSDN…SSVL), 228–340 (SSGP…ASAS), 447–469 (DAQQ…RIRV), and 482–520 (GKSS…VSTT). Low complexity-rich tracts occupy residues 162–175 (SGDV…SSSP), 228–251 (SSGP…LTST), 263–293 (TSST…QTTS), and 329–340 (NSATGPNPASAS). Residues 491-512 (KLTQSKKSLISDAKTTNKTSTP) are compositionally biased toward polar residues. The segment at 849-871 (WVCRNCNRTYKWKNSLKCHLKNE) adopts a C2H2-type 1; degenerate zinc-finger fold. The segment at 878-901 (YFCSKMCGYATNVHSNLKRHLNTK) adopts a C2H2-type 2; degenerate zinc-finger fold. A disordered region spans residues 900–963 (TKCRDREKDA…YTLVFQNDSA (64 aa)). The segment covering 901-915 (KCRDREKDADDEKKP) has biased composition (basic and acidic residues). The span at 937 to 953 (SSSNNNNNGGGSSTSST) shows a compositional bias: low complexity. Residues 954–963 (YTLVFQNDSA) show a composition bias toward polar residues.

As to expression, by stage 11, isoform Q, isoform P and isoform Z are expressed throughout the mesoderm. From stage 15, expression of isoform P expands to all tissues, whereas expression of isoform Z and isoform Q becomes restricted during later stages; starting from stage 14 to 16, isoform Z is expressed in muscle, and isoform Q and isoform Z are expressed in the CNS. For some isoforms, expression is also seen in specific types of cells in the embryo; isoform Z is expressed in the ventral furrow at stage 5, and isoform Q is expressed around the tracheal pits at stage 11. Isoform Z also shows transient enrichment in a dorsal cell layer in the CNS at stages 13 and 14.

It localises to the nucleus. Its function is as follows. Putative transcription factor required for axon growth and guidance in the central and peripheral nervous systems. Repels CNS axons away from the midline by promoting the expression of the midline repellent sli and its receptor robo. In Drosophila melanogaster (Fruit fly), this protein is Longitudinals lacking protein, isoforms J/P/Q/S/Z.